Consider the following 1317-residue polypeptide: Immunoglobulin superfamily member 1 (1317 aa).

Residues 1–20 (MMLRTFTLLLLCIWLNPGMT) form the signal peptide. Ig-like C2-type domains are found at residues 21 to 112 (SLAV…KILE), 114 to 211 (EAPG…KLVV), 216 to 302 (PKPT…SDIL), 311 to 398 (PKTW…ATYN), and 400 to 481 (VELM…HRSK). Topologically, residues 21–499 (SLAVESQPEL…GFLTWNSILN (479 aa)) are extracellular. N43 carries an N-linked (GlcNAc...) asparagine glycan. A disulfide bridge links C48 with C96. C238 and C286 are oxidised to a cystine. N328 and N371 each carry an N-linked (GlcNAc...) asparagine glycan. 2 disulfide bridges follow: C333–C382 and C422–C465. Residues 500 to 520 (EAVRVSLTMQLASLLLLVVWI) traverse the membrane as a helical segment. The Cytoplasmic portion of the chain corresponds to 521 to 531 (RWKCRRLRLRE). Residues 532 to 552 (AWLLGTAQGVAMLFILMALLC) traverse the membrane as a helical segment. Topologically, residues 553–1317 (CGLCNGALTE…EVSVELTVPI (765 aa)) are extracellular. 7 consecutive Ig-like C2-type domains span residues 570–658 (TPKP…ALEL), 659–753 (VGTD…ELVI), 758–850 (PKPF…LVVT), 854–938 (PKPT…SSLS), 946–1041 (TDTF…ELIV), 1046–1131 (PKPS…NHSN), and 1142–1223 (PKPS…EPSD). Cysteines 780 and 830 form a disulfide. A glycan (N-linked (GlcNAc...) asparagine) is linked at N871. A disulfide bridge connects residues C876 and C923. N-linked (GlcNAc...) asparagine glycosylation is found at N967 and N1063. Intrachain disulfides connect C1068/C1115 and C1164/C1207. The tract at residues 1290–1310 (NQEGEPGTTTNSPSSASQEVS) is disordered. Positions 1296-1309 (GTTTNSPSSASQEV) are enriched in polar residues.

Interacts with INHA; the interaction is not confirmed by standard receptor binding assays. Interacts with ACVR1B; the interaction appears to be ligand-dependent as it is diminished by inhibin B and activin A. Interacts with ACVR2A, ACVR2B, ACVRL1 and BMPR1B. Interacts with HECTD1.

The protein resides in the membrane. It localises to the secreted. Seems to be a coreceptor in inhibin signaling, but seems not to be a high-affinity inhibin receptor. Antagonizes activin A signaling in the presence or absence of inhibin B. Necessary to mediate a specific antagonistic effect of inhibin B on activin-stimulated transcription. This Mus musculus (Mouse) protein is Immunoglobulin superfamily member 1 (Igsf1).